Consider the following 40-residue polypeptide: Photosystem II reaction center protein J (40 aa).

A helical transmembrane segment spans residues 10 to 30 (LWLVGTVAGTLVIGLLGVFFY).

This sequence belongs to the PsbJ family. As to quaternary structure, PSII is composed of 1 copy each of membrane proteins PsbA, PsbB, PsbC, PsbD, PsbE, PsbF, PsbH, PsbI, PsbJ, PsbK, PsbL, PsbM, PsbT, PsbX, PsbY, PsbZ, Psb30/Ycf12, at least 3 peripheral proteins of the oxygen-evolving complex and a large number of cofactors. It forms dimeric complexes.

It localises to the plastid. It is found in the chloroplast thylakoid membrane. One of the components of the core complex of photosystem II (PSII). PSII is a light-driven water:plastoquinone oxidoreductase that uses light energy to abstract electrons from H(2)O, generating O(2) and a proton gradient subsequently used for ATP formation. It consists of a core antenna complex that captures photons, and an electron transfer chain that converts photonic excitation into a charge separation. The sequence is that of Photosystem II reaction center protein J from Adiantum capillus-veneris (Maidenhair fern).